A 366-amino-acid polypeptide reads, in one-letter code: tRNA/tmRNA (uracil-C(5))-methyltransferase (366 aa).

S-adenosyl-L-methionine contacts are provided by Gln190, Tyr218, Asn223, Glu239, and Asp299. The active-site Nucleophile is the Cys324. Residue Glu358 is the Proton acceptor of the active site.

This sequence belongs to the class I-like SAM-binding methyltransferase superfamily. RNA M5U methyltransferase family. TrmA subfamily.

The catalysed reaction is uridine(54) in tRNA + S-adenosyl-L-methionine = 5-methyluridine(54) in tRNA + S-adenosyl-L-homocysteine + H(+). It catalyses the reaction uridine(341) in tmRNA + S-adenosyl-L-methionine = 5-methyluridine(341) in tmRNA + S-adenosyl-L-homocysteine + H(+). Dual-specificity methyltransferase that catalyzes the formation of 5-methyluridine at position 54 (m5U54) in all tRNAs, and that of position 341 (m5U341) in tmRNA (transfer-mRNA). This chain is tRNA/tmRNA (uracil-C(5))-methyltransferase, found in Klebsiella pneumoniae (strain 342).